The primary structure comprises 373 residues: Queuine tRNA-ribosyltransferase (373 aa).

Residue Asp-89 is the Proton acceptor of the active site. Substrate contacts are provided by residues 89–93 (DSGGF), Asp-143, Gln-187, and Gly-214. The segment at 245–251 (GVGKPED) is RNA binding. Asp-264 serves as the catalytic Nucleophile. Residues 269–273 (TRNAR) form an RNA binding; important for wobble base 34 recognition region. Residues Cys-302, Cys-304, Cys-307, and His-333 each coordinate Zn(2+).

The protein belongs to the queuine tRNA-ribosyltransferase family. In terms of assembly, homodimer. Within each dimer, one monomer is responsible for RNA recognition and catalysis, while the other monomer binds to the replacement base PreQ1. Requires Zn(2+) as cofactor.

The catalysed reaction is 7-aminomethyl-7-carbaguanine + guanosine(34) in tRNA = 7-aminomethyl-7-carbaguanosine(34) in tRNA + guanine. The protein operates within tRNA modification; tRNA-queuosine biosynthesis. Catalyzes the base-exchange of a guanine (G) residue with the queuine precursor 7-aminomethyl-7-deazaguanine (PreQ1) at position 34 (anticodon wobble position) in tRNAs with GU(N) anticodons (tRNA-Asp, -Asn, -His and -Tyr). Catalysis occurs through a double-displacement mechanism. The nucleophile active site attacks the C1' of nucleotide 34 to detach the guanine base from the RNA, forming a covalent enzyme-RNA intermediate. The proton acceptor active site deprotonates the incoming PreQ1, allowing a nucleophilic attack on the C1' of the ribose to form the product. After dissociation, two additional enzymatic reactions on the tRNA convert PreQ1 to queuine (Q), resulting in the hypermodified nucleoside queuosine (7-(((4,5-cis-dihydroxy-2-cyclopenten-1-yl)amino)methyl)-7-deazaguanosine). This chain is Queuine tRNA-ribosyltransferase, found in Tolumonas auensis (strain DSM 9187 / NBRC 110442 / TA 4).